The following is a 1637-amino-acid chain: Kinesin-like protein KIF21B (1637 aa).

Positions 8-370 (CVKVAVRIRP…LKYANRARNI (363 aa)) constitute a Kinesin motor domain. 87–94 (GQTGAGKT) provides a ligand contact to ATP. Coiled coils occupy residues 376–604 (VNQD…EEEG) and 631–824 (NFQA…ALRR). Positions 400–1099 (MEYKAGKRVI…LQALIYNVQQ (700 aa)) are interaction with TRIM3. Low complexity predominate over residues 509 to 533 (ASARSPYSLGASPAAPAFGGSPASS). Disordered stretches follow at residues 509–538 (ASARSPYSLGASPAAPAFGGSPASSMEDAS) and 552–628 (KKKE…PEEK). Over residues 578 to 627 (NSEETDENEAEEEEEERDESGCEEEEGREDEDEDSGSEESLVDSDSDPEE) the composition is skewed to acidic residues. Serine 579 is modified (phosphoserine). Threonine 582 is subject to Phosphothreonine. Disordered regions lie at residues 830-865 (SERVAGRAGLKPPMLDSGAEVSASTTSSEAESGARS) and 880-906 (FLGDHPAPTVNGTRPARKKFQKKGASQ). Residues 846–865 (SGAEVSASTTSSEAESGARS) show a composition bias toward low complexity. A coiled-coil region spans residues 928 to 1016 (MQRMTIVNLE…EETKEELDST (89 aa)). 3 positions are modified to phosphoserine: serine 1149, serine 1167, and serine 1215. Residues 1194–1217 (RTVSLPTRGSTFPRQSRATETSPL) show a composition bias toward polar residues. Positions 1194-1251 (RTVSLPTRGSTFPRQSRATETSPLTRRKSYDRGQPIRSTDVGFTPPSSPPTRPRNDRN) are disordered. A Phosphothreonine modification is found at threonine 1237. Serine 1241 is modified (phosphoserine). 7 WD repeats span residues 1306-1343 (GHTKPILCLDATDELLFTGSKDRSCKMWNLVTGQEIAA), 1346-1384 (GHPNNVVSIKYCSHSGLVFSVSTSYIKVWDIRDSAKCIR), 1410-1448 (QGEHQINQIALSPSGTMLYAASGNAVRIWELSRFQPVGK), 1451-1493 (GHIG…TGTI), 1502-1539 (PHYDGIECLAIQGDILFSGSRDNGIKKWDLDQQELIQQ), 1543-1582 (AHKDWVCALAFIPGRPMLLSACRAGVIKVWNVDNFTPIGE), and 1585-1622 (GHDSPINAICTNAKHIFTASSDCRVKLWNYVPGLTPCL).

It belongs to the TRAFAC class myosin-kinesin ATPase superfamily. Kinesin family. As to quaternary structure, interacts with TRIM3; the interaction positively affects motility of KIF21B. Interacts with GABARAP and GABA(A) receptor subunits: GABRG2, GABRA1 and GABRA2. May interact with GABA(A) receptor subunits: GABRB2 and GABRB3.

It is found in the cytoplasm. It localises to the cytoskeleton. The protein resides in the cell projection. The protein localises to the dendrite. Its subcellular location is the growth cone. It is found in the axon. It localises to the cytoplasmic vesicle. Plus-end directed microtubule-dependent motor protein which displays processive activity. Is involved in regulation of microtubule dynamics, synapse function and neuronal morphology, including dendritic tree branching and spine formation. Plays a role in lerning and memory. Involved in delivery of gamma-aminobutyric acid (GABA(A)) receptor to cell surface. The protein is Kinesin-like protein KIF21B (KIF21B) of Homo sapiens (Human).